The chain runs to 426 residues: D-tagatose-1,6-bisphosphate aldolase subunit KbaZ (426 aa).

This sequence belongs to the GatZ/KbaZ family. KbaZ subfamily. In terms of assembly, forms a complex with KbaY.

It functions in the pathway carbohydrate metabolism; D-tagatose 6-phosphate degradation; D-glyceraldehyde 3-phosphate and glycerone phosphate from D-tagatose 6-phosphate: step 2/2. Functionally, component of the tagatose-1,6-bisphosphate aldolase KbaYZ that is required for full activity and stability of the Y subunit. Could have a chaperone-like function for the proper and stable folding of KbaY. When expressed alone, KbaZ does not show any aldolase activity. This chain is D-tagatose-1,6-bisphosphate aldolase subunit KbaZ, found in Escherichia coli O127:H6 (strain E2348/69 / EPEC).